Reading from the N-terminus, the 425-residue chain is Inner membrane protein YqcE (425 aa).

Residues 1-8 (MQHNSYRR) are Cytoplasmic-facing. The chain crosses the membrane as a helical span at residues 9–29 (WITLAIISFSGGVSFDLAYLR). Over 30-48 (YIYQIPMAKFMGFSNTEIG) the chain is Periplasmic. The helical transmembrane segment at 49–69 (LIMSTFGIAAIILYAPSGVIA) threads the bilayer. Residues 70 to 75 (DKFSHR) are Cytoplasmic-facing. 2 consecutive transmembrane segments (helical) span residues 76–96 (KMIT…ATYP) and 97–117 (PLWV…LMLW). The Cytoplasmic portion of the chain corresponds to 118 to 138 (SVSIKAASLLGDHSEQGKIMG). A helical membrane pass occupies residues 139 to 159 (WMEGLRGVGVMSLAVFTMWVF). The Periplasmic segment spans residues 160–171 (SRFAPDDSTSLK). The chain crosses the membrane as a helical span at residues 172–192 (TVIIIYSVVYILLGILCWFFV). Residues 193 to 219 (SDNNNLRSANNEEKQSFQLSDILAVLR) are Cytoplasmic-facing. Residues 220-240 (ISTTWYCSMVIFGVFTIYAIL) form a helical membrane-spanning segment. The Periplasmic portion of the chain corresponds to 241-259 (SYSTNYLTEMYGMSLVAAS). The chain crosses the membrane as a helical span at residues 260–280 (YMGIVINKIFRALCGPLGGII). At 281–291 (TTYSKVKSPTR) the chain is on the cytoplasmic side. Residues 292-312 (VIQILSVLGLLTLTALLVTNS) traverse the membrane as a helical segment. Residue Asn-313 is a topological domain, periplasmic. Residues 314–334 (PQSVAMGIGLILLLGFTCYAS) form a helical membrane-spanning segment. At 335–354 (RGLYWACPGEARTPSYIMGT) the chain is on the cytoplasmic side. A helical membrane pass occupies residues 355 to 375 (TVGICSVIGFLPDVFVYPIIG). The Periplasmic portion of the chain corresponds to 376-388 (HWQDTLPAAEAYR). A helical transmembrane segment spans residues 389–409 (NMWLMGMAALGMVIVFTFLLF). At 410-425 (QKIRTADSAPAMASSK) the chain is on the cytoplasmic side.

This sequence to E.coli YihN.

Its subcellular location is the cell inner membrane. The sequence is that of Inner membrane protein YqcE (yqcE) from Escherichia coli (strain K12).